The sequence spans 151 residues: Caveolin-3 (151 aa).

At 1-83 (MMAEEHTDLE…RLLSTLLGVP (83 aa)) the chain is on the cytoplasmic side. Residue K38 forms a Glycyl lysine isopeptide (Lys-Gly) (interchain with G-Cter in SUMO3) linkage. Residues 64-114 (TFTVSKYWCYRLLSTLLGVPLALLWGFLFACISFCHIWAVVPCIKSYLIEI) form a required for interaction with DAG1 region. The helical intramembrane region spans 84–104 (LALLWGFLFACISFCHIWAVV). The Cytoplasmic segment spans residues 105–151 (PCIKSYLIEIQCISHIYSLCIRTFCNPLFAALGQVCSNIKVMLRKEV).

This sequence belongs to the caveolin family. In terms of assembly, homooligomer. Interacts with DYSF. Interacts with DLG1 and KCNA5; forms a ternary complex. Interacts with DAG1 (via its C-terminal); the interaction prevents binding of DAG1 with DMD. Interacts with TRIM72. Interacts with MUSK; may regulate MUSK signaling. Interacts with POPDC1. Interacts with CAVIN1, CAVIN2 and CAVIN4. Post-translationally, sumoylation with SUMO3 by PIAS4 may reduce agonist-induced internalization and desensitization of adrenergic receptor ABRD2.

The protein resides in the golgi apparatus membrane. It localises to the cell membrane. The protein localises to the membrane. It is found in the caveola. Its subcellular location is the sarcolemma. Its function is as follows. May act as a scaffolding protein within caveolar membranes. Interacts directly with G-protein alpha subunits and can functionally regulate their activity. May also regulate voltage-gated potassium channels. Plays a role in the sarcolemma repair mechanism of both skeletal muscle and cardiomyocytes that permits rapid resealing of membranes disrupted by mechanical stress. Mediates the recruitment of CAVIN2 and CAVIN3 proteins to the caveolae. This is Caveolin-3 (CAV3) from Bos taurus (Bovine).